Reading from the N-terminus, the 70-residue chain is Cold shock-like protein CspF (70 aa).

Residues 7-67 form the CSD domain; that stretch reads GIVKTFDGKS…GLRGPSAANV (61 aa).

It localises to the cytoplasm. The chain is Cold shock-like protein CspF (cspF) from Escherichia coli (strain K12).